The primary structure comprises 380 residues: Cytochrome b (380 aa).

The next 4 helical transmembrane spans lie at 33–53 (FGSLLGLCLATQILTGLFLAM), 77–98 (WLIRNIHANGASFFFICIYMHI), 113–133 (WNIGVVLLLLTMMTAFVGYVL), and 178–198 (FFAFHFLFPFVIAAATVLHLL). Heme b-binding residues include histidine 83 and histidine 97. Residues histidine 182 and histidine 196 each coordinate heme b. Histidine 201 provides a ligand contact to a ubiquinone. Helical transmembrane passes span 226–246 (YKDLLGFVAMLLGLTSLALFA), 288–308 (LGGVLALLFSILVLMVVPILH), 320–340 (LTQFLFWTLVADMLILTWIGG), and 347–367 (FIIIGQIASVIYFTIFLVLAP).

It belongs to the cytochrome b family. The cytochrome bc1 complex contains 3 respiratory subunits (MT-CYB, CYC1 and UQCRFS1), 2 core proteins (UQCRC1 and UQCRC2) and probably 6 low-molecular weight proteins. It depends on heme b as a cofactor.

It localises to the mitochondrion inner membrane. Component of the ubiquinol-cytochrome c reductase complex (complex III or cytochrome b-c1 complex) that is part of the mitochondrial respiratory chain. The b-c1 complex mediates electron transfer from ubiquinol to cytochrome c. Contributes to the generation of a proton gradient across the mitochondrial membrane that is then used for ATP synthesis. The polypeptide is Cytochrome b (mt-cyb) (Salmo salar (Atlantic salmon)).